Consider the following 189-residue polypeptide: UPF0312 protein VPA0850 (189 aa).

The signal sequence occupies residues 1 to 22; it reads MKKSLFATGLAIAMALPLGAQA.

This sequence belongs to the UPF0312 family. Type 1 subfamily.

The protein localises to the periplasm. The polypeptide is UPF0312 protein VPA0850 (Vibrio parahaemolyticus serotype O3:K6 (strain RIMD 2210633)).